The following is a 341-amino-acid chain: Diguanylate cyclase DgcP (341 aa).

One can recognise a GAF domain in the interval 18–154 (SLESLVRQLL…LFAGLIAQYI (137 aa)). A GGDEF domain is found at 204 to 337 (HKIMIAFIDL…KQKTPFVAHP (134 aa)). A Mg(2+)-binding site is contributed by Asp212. The substrate site is built by Asn220, His225, and Asp229. Asp255 serves as a coordination point for Mg(2+). Asp255 serves as the catalytic Proton acceptor.

As to quaternary structure, homodimer. The cofactor is Mg(2+).

It carries out the reaction 2 GTP = 3',3'-c-di-GMP + 2 diphosphate. It functions in the pathway purine metabolism; 3',5'-cyclic di-GMP biosynthesis. In terms of biological role, catalyzes the synthesis of cyclic-di-GMP (c-di-GMP) via the condensation of 2 GTP molecules. Cyclic-di-GMP is a second messenger which controls cell surface-associated traits in bacteria. The protein is Diguanylate cyclase DgcP of Escherichia coli (strain K12).